Here is a 911-residue protein sequence, read N- to C-terminus: MVDYHAANQSYQYGPSSAGNGAGGGGSMGDYMAQEDDWDRDLLLDPAWEKQQRKTFTAWCNSHLRKAGTQIENIDEDFRDGLKLMLLLEVISGERLPKPERGKMRVHKINNVNKALDFIASKGVKLVSIGAEEIVDGNAKMTLGMIWTIILRFAIQDISVEETSAKEGLLLWCQRKTAPYKNVNVQNFHISWKDGLAFNALIHRHRPELIEYDKLRKDDPVTNLNNAFEVAEKYLDIPKMLDAEDIVNTARPDEKAIMTYVSSFYHAFSGAQKAETAANRICKVLAVNQENEHLMEDYEKLASDLLEWIRRTIPWLEDRVPQKTIQEMQQKLEDFRDYRRVHKPPKVQEKCQLEINFNTLQTKLRLSNRPAFMPSEGKMVSDINNGWQHLEQAEKGYEEWLLNEIRRLERLDHLAEKFRQKASIHEAWTDGKEAMLKHRDYETATLSDIKALIRKHEAFESDLAAHQDRVEQIAAIAQELNELDYYDSHNVNTRCQKICDQWDALGSLTHSRREALEKTEKQLEAIDQLHLEYAKRAAPFNNWMESAMEDLQDMFIVHTIEEIEGLISAHDQFKSTLPDADREREAILAIHKEAQRIAESNHIKLSGSNPYTTVTPQIINSKWEKVQQLVPKRDHALLEEQSKQQSNEHLRRQFASQANVVGPWIQTKMEEIGRISIEMNGTLEDQLSHLKQYERSIVDYKPNLDLLEQQHQLIQEALIFDNKHTNYTMEHIRVGWEQLLTTIARTINEVENQILTRDAKGISQEQMQEFRASFNHFDKDHGGALGPEEFKACLISLGYDVENDRQGEAEFNRIMSLVDPNHSGLVTFQAFIDFMSRETTDTDTADQVIASFKVLAGDKNFITAEELRRELPPDQAEYCIARMAPYQGPDAVPGALDYKSFSTALYGESDL.

The interval 1-269 (MVDYHAANQS…YVSSFYHAFS (269 aa)) is actin-binding. Residues 12-26 (QYGPSSAGNGAGGGG) form an interaction with VCL region. At Tyr-31 the chain carries Phosphotyrosine. An interaction with VCL region spans residues 40–61 (RDLLLDPAWEKQQRKTFTAWCN). 2 consecutive Calponin-homology (CH) domains span residues 50 to 154 (KQQR…LRFA) and 163 to 269 (TSAK…HAFS). The LXXLL motif motif lies at 84-88 (LMLLL). The interaction with VCL stretch occupies residues 108 to 126 (KINNVNKALDFIASKGVKL). Residue Lys-114 is modified to N6-acetyllysine. Residues 177–192 (TAPYKNVNVQNFHISW) form a polyphosphoinositide (PIP2)-binding region. Lys-214 bears the N6-acetyllysine mark. Thr-249 is subject to Phosphothreonine. Spectrin repeat units lie at residues 293-403 (HLME…WLLN), 413-518 (HLAE…ALEK), 528-639 (QLHL…ALLE), and 649-752 (HLRR…EVEN). Residues Lys-592 and Lys-625 each carry the N6-acetyllysine modification. Ser-696 is subject to Phosphoserine. The interval 736–911 (WEQLLTTIAR…STALYGESDL (176 aa)) is mediates interaction with MICALL2. EF-hand domains lie at 765–800 (EQMQ…LGYD) and 806–841 (QGEA…ETTD). Asp-778 is a Ca(2+) binding site. Lys-779 is modified (N6-acetyllysine). Ca(2+) is bound by residues Asp-780 and Glu-789. Lys-859 bears the N6-acetyllysine mark. Position 909 is a phosphoserine (Ser-909).

It belongs to the alpha-actinin family. As to quaternary structure, homodimer; antiparallel. Binds TRIM3 at the N-terminus. Interacts with MICALL2 (preferentially in opened conformation); stimulated by RAB13 activation. Identified in a complex with CASK, IQGAP1, MAGI2, NPHS1, SPTAN1 and SPTBN1. Identified in a IGF2BP1-dependent mRNP granule complex containing untranslated mRNAs. Component of the CART complex, at least composed of ACTN4, HGS/HRS, MYO5B and TRIM3. Interacts with MAGI1. Interacts with PDLIM2. Interacts with PPARG and RARA. Binds to VCL; this interaction triggers VCL conformational changes. Interacts with SEPTIN14. Interacts with IGSF8. As to expression, widely expressed.

It localises to the nucleus. Its subcellular location is the cytoplasm. The protein resides in the cell junction. The protein localises to the cytoskeleton. It is found in the stress fiber. It localises to the perinuclear region. In terms of biological role, F-actin cross-linking protein which is thought to anchor actin to a variety of intracellular structures. This is a bundling protein. Probably involved in vesicular trafficking via its association with the CART complex. The CART complex is necessary for efficient transferrin receptor recycling but not for EGFR degradation. Involved in tight junction assembly in epithelial cells probably through interaction with MICALL2. Links MICALL2 to the actin cytoskeleton and recruits it to the tight junctions. May also function as a transcriptional coactivator, stimulating transcription mediated by the nuclear hormone receptors PPARG and RARA. Association with IGSF8 regulates the immune synapse formation and is required for efficient T-cell activation. This is Alpha-actinin-4 from Homo sapiens (Human).